We begin with the raw amino-acid sequence, 270 residues long: Regulatory protein RecX (270 aa).

It belongs to the RecX family.

It localises to the cytoplasm. Its function is as follows. Modulates RecA activity. This chain is Regulatory protein RecX, found in Bacillus thuringiensis subsp. konkukian (strain 97-27).